The following is a 204-amino-acid chain: Cold and drought-regulated protein CORA (204 aa).

Repeat copies occupy residues 54-59 (YNHGGG), 65-70 (YNHGGG), 71-76 (YNHGGG), 78-83 (YHNGGG), 85-90 (YNHGGG), 98-100 (HGG), 101-103 (HGG), 112-114 (HGG), 115-117 (HGG), 126-128 (HGG), 129-131 (HGG), 164-169 (YNHGGG), 171-176 (YNHGGG), 178-180 (HGG), 181-183 (HGG), 184-186 (HGG), 187-189 (HGG), and 190-192 (HGG). The tract at residues 54–176 (YNHGGGYNGG…GGGGYNHGGG (123 aa)) is 7 X 6 AA repeats of Y-N-H-G-G-G. Positions 98 to 192 (HGGHGGGGYN…GHGGHGGHGG (95 aa)) are 11 X 3 AA repeats of H-G-G. The segment covering 169 to 194 (GGYNHGGGGHGGHGGHGGHGGHGGHG) has biased composition (gly residues). Residues 169 to 204 (GGYNHGGGGHGGHGGHGGHGGHGGHGAVQTEDNTQN) form a disordered region.

The protein belongs to the GRP family.

In terms of biological role, may be involved in resistance of the plant to environmental stress. This chain is Cold and drought-regulated protein CORA (CORA), found in Medicago sativa (Alfalfa).